We begin with the raw amino-acid sequence, 418 residues long: UDP-N-acetylglucosamine 1-carboxyvinyltransferase (418 aa).

Position 23–24 (23–24 (KN)) interacts with phosphoenolpyruvate. R93 is a binding site for UDP-N-acetyl-alpha-D-glucosamine. D117 functions as the Proton donor in the catalytic mechanism. UDP-N-acetyl-alpha-D-glucosamine-binding residues include D305 and I327.

It belongs to the EPSP synthase family. MurA subfamily.

Its subcellular location is the cytoplasm. It carries out the reaction phosphoenolpyruvate + UDP-N-acetyl-alpha-D-glucosamine = UDP-N-acetyl-3-O-(1-carboxyvinyl)-alpha-D-glucosamine + phosphate. It participates in cell wall biogenesis; peptidoglycan biosynthesis. In terms of biological role, cell wall formation. Adds enolpyruvyl to UDP-N-acetylglucosamine. In Corynebacterium jeikeium (strain K411), this protein is UDP-N-acetylglucosamine 1-carboxyvinyltransferase.